The primary structure comprises 453 residues: L-cysteine:1D-myo-inositol 2-amino-2-deoxy-alpha-D-glucopyranoside ligase (453 aa).

A Zn(2+)-binding site is contributed by C58. L-cysteinyl-5'-AMP contacts are provided by residues 58–61 (CGIT), T73, and 96–98 (NVT). The 'HIGH' region motif lies at 60 to 70 (ITPYDATHMGH). The 'ERGGDP' region signature appears at 221-226 (ERGGDP). W262 lines the L-cysteinyl-5'-AMP pocket. Residue C266 coordinates Zn(2+). An L-cysteinyl-5'-AMP-binding site is contributed by 284 to 286 (GND). A Zn(2+)-binding site is contributed by H291. V317 contacts L-cysteinyl-5'-AMP. The 'KMSKS' region signature appears at 323-327 (KMSKS).

Belongs to the class-I aminoacyl-tRNA synthetase family. MshC subfamily. As to quaternary structure, monomer. Zn(2+) is required as a cofactor.

The enzyme catalyses 1D-myo-inositol 2-amino-2-deoxy-alpha-D-glucopyranoside + L-cysteine + ATP = 1D-myo-inositol 2-(L-cysteinylamino)-2-deoxy-alpha-D-glucopyranoside + AMP + diphosphate + H(+). Functionally, catalyzes the ATP-dependent condensation of GlcN-Ins and L-cysteine to form L-Cys-GlcN-Ins. In Rothia mucilaginosa (strain DY-18) (Stomatococcus mucilaginosus), this protein is L-cysteine:1D-myo-inositol 2-amino-2-deoxy-alpha-D-glucopyranoside ligase.